The following is a 144-amino-acid chain: Large ribosomal subunit protein uL11 (144 aa).

Belongs to the universal ribosomal protein uL11 family. As to quaternary structure, part of the ribosomal stalk of the 50S ribosomal subunit. Interacts with L10 and the large rRNA to form the base of the stalk. L10 forms an elongated spine to which L12 dimers bind in a sequential fashion forming a multimeric L10(L12)X complex. One or more lysine residues are methylated.

Functionally, forms part of the ribosomal stalk which helps the ribosome interact with GTP-bound translation factors. This chain is Large ribosomal subunit protein uL11, found in Neisseria meningitidis serogroup C (strain 053442).